Here is a 444-residue protein sequence, read N- to C-terminus: Chromosomal replication initiator protein DnaA (444 aa).

Positions 1 to 73 (MDSSAQQLWH…AEVVQDIVGY (73 aa)) are domain I, interacts with DnaA modulators. A domain II region spans residues 73 to 104 (YPVEIQLTAQQGDLIAIFQPHTSLESELSPTN). The domain III, AAA+ region stretch occupies residues 105–321 (QLNPKYNFSR…GALIRATTYI (217 aa)). ATP-binding residues include Gly149, Gly151, Lys152, and Thr153. The tract at residues 322-444 (SISGLPMTVE…ERINSLSRNQ (123 aa)) is domain IV, binds dsDNA.

The protein belongs to the DnaA family. As to quaternary structure, oligomerizes as a right-handed, spiral filament on DNA at oriC.

The protein resides in the cytoplasm. Its function is as follows. Plays an essential role in the initiation and regulation of chromosomal replication. ATP-DnaA binds to the origin of replication (oriC) to initiate formation of the DNA replication initiation complex once per cell cycle. Binds the DnaA box (a 9 base pair repeat at the origin) and separates the double-stranded (ds)DNA. Forms a right-handed helical filament on oriC DNA; dsDNA binds to the exterior of the filament while single-stranded (ss)DNA is stabiized in the filament's interior. The ATP-DnaA-oriC complex binds and stabilizes one strand of the AT-rich DNA unwinding element (DUE), permitting loading of DNA polymerase. After initiation quickly degrades to an ADP-DnaA complex that is not apt for DNA replication. Binds acidic phospholipids. The polypeptide is Chromosomal replication initiator protein DnaA (Microcystis aeruginosa (strain NIES-843 / IAM M-2473)).